The sequence spans 468 residues: MTERAGLRLHDTAAGAVRDFVPLREGHVSIYLCGATVQGLPHIGHVRSGVAFDILRRWLMARGFDVAFIRNVTDIDDKILNKAAAAERPWWEWAATYERAFTAAYDALDVLPPSAEPRATGHVTQMVELIERLIERGHAYAGGGDVYFDVLSYPDYGQLSGHKVDDVHQGEGVATGKRDQRDFTLWKGAKPGEPSWPTPWGRGRPGWHLECSAMARTYLGAQFDIHCGGMDLIFPHHENEIAQSRAAGDGFARYWLHNGWVTMGGEKMSKSLGNVLAIPTMLQRVRPAELRYYLGSAHYRSILEFSDIALQDAVNAYVGVEEFLHRVRSRVGAVVVGDWTPRFAAALDDDLSVPIALAEIHHIRAEGNRALDAGDHDAALQSASSIRALMGILGCDPLDERWESRDETSAALAAVDVLVQAELENRQKAREERNWALADEIRNRLKNAGIEVTDTADGPQWLLGGDGK.

Cys33 serves as a coordination point for Zn(2+). The 'HIGH' region signature appears at 35–45; it reads ATVQGLPHIGH. Cys211, His236, and Glu240 together coordinate Zn(2+). Positions 267 to 271 match the 'KMSKS' region motif; it reads KMSKS. Lys270 provides a ligand contact to ATP.

The protein belongs to the class-I aminoacyl-tRNA synthetase family. As to quaternary structure, monomer. Zn(2+) is required as a cofactor.

It is found in the cytoplasm. It catalyses the reaction tRNA(Cys) + L-cysteine + ATP = L-cysteinyl-tRNA(Cys) + AMP + diphosphate. The sequence is that of Cysteine--tRNA ligase from Mycobacterium ulcerans (strain Agy99).